The following is a 353-amino-acid chain: MATDGLHENETLASLKSEAESLKGKLEEERAKLHDVELHQVAERVEALGQFVMKTRRTLKGHGNKVLCMDWCKDKRRIVSSSQDGKVIVWDSFTTNKEHAVTMPCTWVMACAYAPSGCAIACGGLDNKCSVYPLTFDKNENMAAKKKSVAMHTNYLSACSFTNSDMQILTASGDGTCALWDVESGQLLQSFHGHGADVLCLDLAPSETGNTFVSGGCDKKAMVWDMRSGQCVQAFETHESDVNSVRYYPSGDAFASGSDDATCRLYDLRADREVAIYSKESIIFGASSVDFSLSGRLLFAGYNDYTINVWDVLKGSRVSILFGHENRVSTLRVSPDGTAFCSGSWDHTLRVWA.

7 WD repeats span residues 61–100, 103–142, 151–192, 194–236, 237–276, 278–320, and 323–352; these read GHGN…KEHA, MPCT…NENM, MHTN…QSFH, HGAD…QAFE, THES…EVAI, SKES…RVSI, and GHEN…LRVW.

It belongs to the WD repeat G protein beta family. In terms of assembly, component of a complex composed of RGS9 (isoform RGS9-1), GNB5 and RGS9BP; within this complex, the presence of GNB5 stabilizes both itself and RGS9 and increases RGS9 GTPase-activating protein (GAP) activity. Interacts with RGS7, forming the RGS7-GNB5 complex; within this complex, the presence of GNB5 increases RGS7 GTPase-activating protein (GAP) activity. Interacts with GPR158; promotes the GTPase activator activity of the RGS7-GNB5 complex in absence of glycine, in contrast GTPase activator activity of the RGS7-GNB5 complex is inhibited in presence of glycine. Interacts with RGS6. In terms of tissue distribution, detected in brain.

Its subcellular location is the membrane. Its function is as follows. Enhances GTPase-activating protein (GAP) activity of regulator of G protein signaling (RGS) proteins, such as RGS7 and RGS9, hence involved in the termination of the signaling initiated by the G protein coupled receptors (GPCRs) by accelerating the GTP hydrolysis on the G-alpha subunits, thereby promoting their inactivation. Increases RGS7 GTPase-activating protein (GAP) activity, thereby regulating mood and cognition. Increases RGS9 GTPase-activating protein (GAP) activity, hence contributes to the deactivation of G protein signaling initiated by D(2) dopamine receptors. May play an important role in neuronal signaling, including in the parasympathetic, but not sympathetic, control of heart rate. The chain is Guanine nucleotide-binding protein subunit beta-5 (Gnb5) from Rattus norvegicus (Rat).